We begin with the raw amino-acid sequence, 330 residues long: MSSRKKKDAEVAQASVEVNPDLDVEELEGVGRVTGAKLKERGFFTVRDVAFASVKELAEVVGNEERALQIVEAARKMLGLHSFVSALEVYERRKTIRRISTGVKALDELLGGGIETRAVTEVAGEFGSGKTQLCHQLAVMVQLPEERGGLGAKAIYIDTENTFRPERIMQIAKARGLDPDQALNNIFYARAYSSDHQMILVDQAKSIIKQNNVALLVVDSVIAHFRSEFPGRENLAERQQKLNKHVADLLRLADAYDVAVVITNQVMAQPDVFFGNPLRPAGGNILAHGATYRLWLRKSKENIRIAKIFDSPYHPEGEVSFRITEEGLVD.

ATP is bound at residue 124–131 (GEFGSGKT).

Belongs to the eukaryotic RecA-like protein family.

In terms of biological role, involved in DNA repair and in homologous recombination. Binds and assemble on single-stranded DNA to form a nucleoprotein filament. Hydrolyzes ATP in a ssDNA-dependent manner and promotes DNA strand exchange between homologous DNA molecules. The sequence is that of DNA repair and recombination protein RadA from Pyrobaculum neutrophilum (strain DSM 2338 / JCM 9278 / NBRC 100436 / V24Sta) (Thermoproteus neutrophilus).